The chain runs to 234 residues: GTP cyclohydrolase 1 type 2 homolog (234 aa).

Positions 61, 62, 80, 195, and 199 each coordinate a divalent metal cation.

The protein belongs to the GTP cyclohydrolase I type 2/NIF3 family. As to quaternary structure, homohexamer.

The chain is GTP cyclohydrolase 1 type 2 homolog from Methanothermobacter thermautotrophicus (strain ATCC 29096 / DSM 1053 / JCM 10044 / NBRC 100330 / Delta H) (Methanobacterium thermoautotrophicum).